A 378-amino-acid polypeptide reads, in one-letter code: Packaging protein 3 (378 aa).

2 disordered regions span residues M1–V73 and S355–I378. An interaction with packaging protein 1 region spans residues M1–C178. Composition is skewed to low complexity over residues G16 to R35 and P49 to G58. S362 is subject to Phosphoserine; by host. The segment covering F363 to I378 has biased composition (acidic residues).

The protein belongs to the adenoviridae packaging protein 3 family. In terms of assembly, part of the genome packaging complex composed of packaging proteins 1, 2 and 3; this complex specifically binds to the packaging sequence on the left end of viral genomic DNA and performs packaging of the viral genome. Interacts with hexon-linking protein IIIa; this interaction is required to promote correct genome packaging. In terms of processing, cleaved at different sites by the viral protease during virion maturation.

It localises to the host nucleus. Involved in viral genome packaging through its interaction with packaging proteins 1 and 2. After proteolytic cleavage by adenovirus protease, L1 52/55k protein is removed from the capsid during viral maturation. This chain is Packaging protein 3, found in Galliformes (FAdV-1).